Reading from the N-terminus, the 221-residue chain is CASP-like protein 2U10 (221 aa).

The segment at 1–22 (MDSSSKPMNGSAGGSPVGDERK) is disordered. Topologically, residues 1–31 (MDSSSKPMNGSAGGSPVGDERKMGDHEHEFR) are cytoplasmic. Residues 32 to 52 (ISIILLRSFLLVLVIISEALM) traverse the membrane as a helical segment. Over 53–91 (VTDRETGSVPLPFFGLPRPVFVTKTAKYELVTGLKFYVD) the chain is Extracellular. Residues 92-112 (ALGVVIGYTVLHLLFNIGLVA) traverse the membrane as a helical segment. The Cytoplasmic portion of the chain corresponds to 113-122 (TKGTVVDCKS). A helical transmembrane segment spans residues 123-143 (VAWISFIADSMMGYLLLSSAA). Over 144–174 (VATEIGYLAEEGAPAVLWRKVCNAFGYFCTV) the chain is Extracellular. A helical membrane pass occupies residues 175 to 195 (YAISVVICFIAALVSFVVVGI). The Cytoplasmic segment spans residues 196–221 (SAYHLFRLYGIQQQAAREKEKLSAEM).

The protein belongs to the Casparian strip membrane proteins (CASP) family. Homodimer and heterodimers.

It localises to the cell membrane. This Selaginella moellendorffii (Spikemoss) protein is CASP-like protein 2U10.